Reading from the N-terminus, the 100-residue chain is Proline-rich protein 15-like protein (100 aa).

Positions tyrosine 29 to asparagine 51 are disordered.

It belongs to the PRR15 family.

The sequence is that of Proline-rich protein 15-like protein (Prr15l) from Mus musculus (Mouse).